The chain runs to 334 residues: Ferredoxin--NADP reductase (334 aa).

FAD-binding residues include D33, Q41, Y46, A86, F120, D286, and T327.

Belongs to the ferredoxin--NADP reductase type 2 family. In terms of assembly, homodimer. It depends on FAD as a cofactor.

The enzyme catalyses 2 reduced [2Fe-2S]-[ferredoxin] + NADP(+) + H(+) = 2 oxidized [2Fe-2S]-[ferredoxin] + NADPH. This Rickettsia massiliae (strain Mtu5) protein is Ferredoxin--NADP reductase.